A 496-amino-acid chain; its full sequence is UDP-N-acetylmuramoyl-L-alanyl-D-glutamate--2,6-diaminopimelate ligase (496 aa).

UDP-N-acetyl-alpha-D-muramoyl-L-alanyl-D-glutamate is bound by residues Leu29 and Ser31. 118–124 provides a ligand contact to ATP; sequence GTNGKTT. Residues Asn159, 160-161, Ser187, Gln193, and Arg195 each bind UDP-N-acetyl-alpha-D-muramoyl-L-alanyl-D-glutamate; that span reads TT. At Lys227 the chain carries N6-carboxylysine. Meso-2,6-diaminopimelate contacts are provided by residues Arg392, 416 to 419, Gly467, and Glu471; that span reads DNPR. The Meso-diaminopimelate recognition motif signature appears at 416–419; sequence DNPR.

Belongs to the MurCDEF family. MurE subfamily. Requires Mg(2+) as cofactor. In terms of processing, carboxylation is probably crucial for Mg(2+) binding and, consequently, for the gamma-phosphate positioning of ATP.

It is found in the cytoplasm. It carries out the reaction UDP-N-acetyl-alpha-D-muramoyl-L-alanyl-D-glutamate + meso-2,6-diaminopimelate + ATP = UDP-N-acetyl-alpha-D-muramoyl-L-alanyl-gamma-D-glutamyl-meso-2,6-diaminopimelate + ADP + phosphate + H(+). It participates in cell wall biogenesis; peptidoglycan biosynthesis. Functionally, catalyzes the addition of meso-diaminopimelic acid to the nucleotide precursor UDP-N-acetylmuramoyl-L-alanyl-D-glutamate (UMAG) in the biosynthesis of bacterial cell-wall peptidoglycan. The chain is UDP-N-acetylmuramoyl-L-alanyl-D-glutamate--2,6-diaminopimelate ligase from Wigglesworthia glossinidia brevipalpis.